A 4246-amino-acid chain; its full sequence is Intermembrane lipid transfer protein vps13F (4246 aa).

Residues 2–113 (FESIVSNLLT…LLLQKKLKKL (112 aa)) form the Chorein N-terminal domain. 16 disordered regions span residues 141–271 (IKEK…EDED), 401–420 (PKKS…PPPK), 591–759 (KAED…SILG), 914–944 (VSSS…EKKL), 964–1014 (KKSK…TNDE), 1217–1251 (QAQQ…IKSP), 1356–1379 (ISTH…DRVD), 1395–1436 (YNGV…KSKK), 1622–1683 (REKR…KSQS), 2101–2131 (LESL…QQQQ), 2211–2237 (HHSK…EKEK), 2471–2513 (QQQH…KSKQ), 2704–2756 (LSTS…QTTK), 3421–3449 (IDDD…TSPL), 3611–3652 (KTLN…NNQN), and 3794–3813 (NNNN…NIDE). Positions 168–201 (NASPVNSNNNNNNNSNLVSESNIPSSSSSSSSSL) are enriched in low complexity. The span at 207-217 (NSSKDANKSDD) shows a compositional bias: basic and acidic residues. Positions 218–271 (TDMDVDDDDEFQEATEGDYDNEEEQDDHDEEDDLSDDDDDDDDEEDDYEMEDED) are enriched in acidic residues. Low complexity-rich tracts occupy residues 401-413 (PKKS…TTTP) and 597-658 (QQQQ…SNST). The span at 659–668 (DSKDIMKSSG) shows a compositional bias: basic and acidic residues. The span at 669 to 680 (DKNVNNNNNMGD) shows a compositional bias: low complexity. A compositionally biased stretch (basic and acidic residues) spans 681–702 (NENKDNIDKKEENKNDDQDNKN). 2 stretches are compositionally biased toward low complexity: residues 725–747 (SGGW…QQQQ) and 914–924 (VSSSPSPVSSP). Composition is skewed to basic and acidic residues over residues 925 to 944 (SRDK…EKKL) and 987 to 1001 (DKYS…REES). Over residues 1217–1241 (QAQQQAQQQQQSQHPSSNDDNSSSN) the composition is skewed to low complexity. Residues 1400–1409 (SDDDNNDDEN) show a composition bias toward acidic residues. 2 stretches are compositionally biased toward basic and acidic residues: residues 1410–1431 (DKTT…DSLK) and 1622–1634 (REKR…DKDN). Low complexity predominate over residues 1644–1670 (QQSIPQKQQQQQQQQQQQQQQQQQQQQ). Composition is skewed to low complexity over residues 2471-2506 (QQQH…NNNN), 2705-2755 (STST…TQTT), 3430-3449 (DSGS…TSPL), 3613-3652 (LNNN…NNQN), and 3794-3809 (NNNN…NDFN).

The protein belongs to the VPS13 family.

The protein localises to the membrane. Functionally, mediates the transfer of lipids between membranes at organelle contact sites. The sequence is that of Intermembrane lipid transfer protein vps13F (vps13F) from Dictyostelium discoideum (Social amoeba).